The primary structure comprises 80 residues: Trefoil factor 3 (80 aa).

The N-terminal stretch at 1–21 (MAARALCMLGLVLALLSSSSA) is a signal peptide. In terms of domain architecture, P-type spans 30–73 (NQCAVPAKDRVDCGYPHVTPKECNNRGCCFDSRIPGVPWCFKPL). 3 disulfide bridges follow: Cys-32/Cys-58, Cys-42/Cys-57, and Cys-52/Cys-69.

As to quaternary structure, monomer. Homodimer; disulfide-linked. In terms of tissue distribution, expressed in goblet cells of the intestines and colon (at protein level). Expressed by goblet cells of small and large intestinal epithelia and also by the uterus. Also expressed in the hypothalamus where it is detected in paraventricular, periventricular and supraoptic nuclei (at protein level).

The protein localises to the secreted. The protein resides in the extracellular space. Its subcellular location is the extracellular matrix. It is found in the cytoplasm. Involved in the maintenance and repair of the intestinal mucosa. Promotes the mobility of epithelial cells in healing processes (motogen). The sequence is that of Trefoil factor 3 (TFF3) from Homo sapiens (Human).